We begin with the raw amino-acid sequence, 178 residues long: RNA pyrophosphohydrolase (178 aa).

Positions 18–171 constitute a Nudix hydrolase domain; sequence PYRPCVGLMV…KRKVYEQVVA (154 aa). The short motif at 59–80 is the Nudix box element; the sequence is GGIDKGEDPAQAALRELYEETG.

It belongs to the Nudix hydrolase family. RppH subfamily. The cofactor is a divalent metal cation.

Its function is as follows. Accelerates the degradation of transcripts by removing pyrophosphate from the 5'-end of triphosphorylated RNA, leading to a more labile monophosphorylated state that can stimulate subsequent ribonuclease cleavage. The polypeptide is RNA pyrophosphohydrolase (Brucella melitensis biotype 2 (strain ATCC 23457)).